The primary structure comprises 213 residues: dITP/XTP pyrophosphatase (213 aa).

17-22 (SNNAGK) is a substrate binding site. Residues E49 and D78 each contribute to the Mg(2+) site. Residue D78 is the Proton acceptor of the active site. Residues S79, 164–167 (FGYD), K187, and 192–193 (HR) each bind substrate.

This sequence belongs to the HAM1 NTPase family. As to quaternary structure, homodimer. The cofactor is Mg(2+).

The catalysed reaction is XTP + H2O = XMP + diphosphate + H(+). It catalyses the reaction dITP + H2O = dIMP + diphosphate + H(+). The enzyme catalyses ITP + H2O = IMP + diphosphate + H(+). In terms of biological role, pyrophosphatase that catalyzes the hydrolysis of nucleoside triphosphates to their monophosphate derivatives, with a high preference for the non-canonical purine nucleotides XTP (xanthosine triphosphate), dITP (deoxyinosine triphosphate) and ITP. Seems to function as a house-cleaning enzyme that removes non-canonical purine nucleotides from the nucleotide pool, thus preventing their incorporation into DNA/RNA and avoiding chromosomal lesions. The polypeptide is dITP/XTP pyrophosphatase (Bordetella bronchiseptica (strain ATCC BAA-588 / NCTC 13252 / RB50) (Alcaligenes bronchisepticus)).